The following is a 375-amino-acid chain: Growth/differentiation factor 8 (375 aa).

An N-terminal signal peptide occupies residues 1–18; that stretch reads MQRLQICVYIYLFVLIVA. Positions 19–266 are excised as a propeptide; that stretch reads GPVDLSENSE…VTDTPKRSRR (248 aa). N-linked (GlcNAc...) asparagine glycosylation occurs at Asn-71. 3 cysteine pairs are disulfide-bonded: Cys-281-Cys-340, Cys-309-Cys-372, and Cys-313-Cys-374.

This sequence belongs to the TGF-beta family. As to quaternary structure, homodimer; disulfide-linked. Interacts with WFIKKN2, leading to inhibit its activity. Interacts with FSTL3. Synthesized as large precursor molecule that undergoes proteolytic cleavage to generate an N-terminal propeptide and a disulfide linked C-terminal dimer, which is the biologically active molecule. The circulating form consists of a latent complex of the C-terminal dimer and other proteins, including its propeptide, which maintain the C-terminal dimer in a latent, inactive state. Ligand activation requires additional cleavage of the prodomain by a tolloid-like metalloproteinase.

Its subcellular location is the secreted. Functionally, acts specifically as a negative regulator of skeletal muscle growth. The protein is Growth/differentiation factor 8 (MSTN) of Vulpes vulpes (Red fox).